The following is a 218-amino-acid chain: dTTP/UTP pyrophosphatase (218 aa).

The active-site Proton acceptor is D76.

It belongs to the Maf family. YhdE subfamily. A divalent metal cation serves as cofactor.

The protein resides in the cytoplasm. The enzyme catalyses dTTP + H2O = dTMP + diphosphate + H(+). It catalyses the reaction UTP + H2O = UMP + diphosphate + H(+). In terms of biological role, nucleoside triphosphate pyrophosphatase that hydrolyzes dTTP and UTP. May have a dual role in cell division arrest and in preventing the incorporation of modified nucleotides into cellular nucleic acids. The sequence is that of dTTP/UTP pyrophosphatase from Cytophaga hutchinsonii (strain ATCC 33406 / DSM 1761 / CIP 103989 / NBRC 15051 / NCIMB 9469 / D465).